The sequence spans 230 residues: Protein-L-isoaspartate O-methyltransferase (230 aa).

The active site involves serine 65.

It belongs to the methyltransferase superfamily. L-isoaspartyl/D-aspartyl protein methyltransferase family. In terms of assembly, monomer. Highest contents in seeds.

It localises to the cytoplasm. The enzyme catalyses [protein]-L-isoaspartate + S-adenosyl-L-methionine = [protein]-L-isoaspartate alpha-methyl ester + S-adenosyl-L-homocysteine. Catalyzes the methyl esterification of L-isoaspartyl residues in peptides and proteins that result from spontaneous decomposition of normal L-aspartyl and L-asparaginyl residues. It plays a role in the repair and/or degradation of damaged proteins. This enzyme does not act on D-aspartyl residues. This is Protein-L-isoaspartate O-methyltransferase (PCM) from Triticum aestivum (Wheat).